The primary structure comprises 513 residues: U3 small nucleolar RNA-associated protein 15 (513 aa).

6 WD repeats span residues Lys-37–Ser-78, Arg-79–Leu-118, Thr-124–Leu-162, Gly-166–Ile-206, Asn-210–Glu-247, and Asn-250–Phe-294. The disordered stretch occupies residues Lys-332–Ser-354.

As to quaternary structure, interacts with snoRNA U3. Interacts with MPP10. Component of the ribosomal small subunit (SSU) processome composed of at least 40 protein subunits and snoRNA U3. In the absence of snoRNA3, forms a complex with other t-UTPs. This complex can associate with pre-18S ribosomal RNAs.

It localises to the nucleus. The protein resides in the nucleolus. Its function is as follows. Involved in nucleolar processing of pre-18S ribosomal RNA. Required for optimal pre-ribosomal RNA transcription by RNA polymerase I together with a subset of U3 proteins required for transcription (t-UTPs). The polypeptide is U3 small nucleolar RNA-associated protein 15 (UTP15) (Saccharomyces cerevisiae (strain ATCC 204508 / S288c) (Baker's yeast)).